Consider the following 259-residue polypeptide: MSNVVTDPTNSKIQVRDLNFYYGKFHALKNISLDIEKNKVTAFIGPSGCGKSTLLRTFNKMFQLYPEQRAEGEILLDGQNILTDSQDVALLRAKVGMVFQKPTPFPMSIYDNIAFGVRLFEKLSRADMDERVQWALTKAALWSETKDKLHQSGYSLSGGQQQRLCIARGIAIRPEVLLLDEPCSALDPISTSRIEELITELKQDYTVVIVTHNMQQAARCSDYTAFMYLGELIEFSDTDKLFTAPAQRQTEDYITGRYG.

The ABC transporter domain occupies 13 to 254 (IQVRDLNFYY…PAQRQTEDYI (242 aa)). 45 to 52 (GPSGCGKS) serves as a coordination point for ATP.

The protein belongs to the ABC transporter superfamily. Phosphate importer (TC 3.A.1.7) family. The complex is composed of two ATP-binding proteins (PstB), two transmembrane proteins (PstC and PstA) and a solute-binding protein (PstS).

Its subcellular location is the cell inner membrane. The catalysed reaction is phosphate(out) + ATP + H2O = ADP + 2 phosphate(in) + H(+). Part of the ABC transporter complex PstSACB involved in phosphate import. Responsible for energy coupling to the transport system. This Edwardsiella tarda protein is Phosphate import ATP-binding protein PstB.